Here is a 778-residue protein sequence, read N- to C-terminus: Endonuclease MutS2 (778 aa).

Residue 332-339 (GPNTGGKT) coordinates ATP. The Smr domain maps to 703–778 (IDLRGKMVDE…GLGCTVVTLK (76 aa)).

It belongs to the DNA mismatch repair MutS family. MutS2 subfamily. Homodimer. Binds to stalled ribosomes, contacting rRNA.

In terms of biological role, endonuclease that is involved in the suppression of homologous recombination and thus may have a key role in the control of bacterial genetic diversity. Its function is as follows. Acts as a ribosome collision sensor, splitting the ribosome into its 2 subunits. Detects stalled/collided 70S ribosomes which it binds and splits by an ATP-hydrolysis driven conformational change. Acts upstream of the ribosome quality control system (RQC), a ribosome-associated complex that mediates the extraction of incompletely synthesized nascent chains from stalled ribosomes and their subsequent degradation. Probably generates substrates for RQC. This Fusobacterium nucleatum subsp. nucleatum (strain ATCC 25586 / DSM 15643 / BCRC 10681 / CIP 101130 / JCM 8532 / KCTC 2640 / LMG 13131 / VPI 4355) protein is Endonuclease MutS2.